The chain runs to 226 residues: MKNIQKILPLYFVAGTQDCRHLGENLSENLLFVLKQALEGGITCFQFRDKGKFSLEHTPSAQKALAMSCRDLCREYGVPFIVDDNVDLALEIEADGIHVGQSDMPVQEIRAKTDKPLIIGWSVNRLDEAKIGENLAEIDYFGIGPIFPTQSKENPKPTLGMAFIQTLRNVGITKPLVAIGGVKLAHVKTLREFGADGVAVITAITHADNVQAATKALREASDEYAK.

4-amino-2-methyl-5-(diphosphooxymethyl)pyrimidine contacts are provided by residues 46–50 (QFRDK) and Asp-83. Mg(2+)-binding residues include Asp-84 and Asp-103. Position 122 (Ser-122) interacts with 4-amino-2-methyl-5-(diphosphooxymethyl)pyrimidine. 149 to 151 (TQS) provides a ligand contact to 2-[(2R,5Z)-2-carboxy-4-methylthiazol-5(2H)-ylidene]ethyl phosphate. Lys-152 contacts 4-amino-2-methyl-5-(diphosphooxymethyl)pyrimidine. 2-[(2R,5Z)-2-carboxy-4-methylthiazol-5(2H)-ylidene]ethyl phosphate contacts are provided by residues Gly-181 and 201–202 (IT).

It belongs to the thiamine-phosphate synthase family. Mg(2+) serves as cofactor.

The enzyme catalyses 2-[(2R,5Z)-2-carboxy-4-methylthiazol-5(2H)-ylidene]ethyl phosphate + 4-amino-2-methyl-5-(diphosphooxymethyl)pyrimidine + 2 H(+) = thiamine phosphate + CO2 + diphosphate. It catalyses the reaction 2-(2-carboxy-4-methylthiazol-5-yl)ethyl phosphate + 4-amino-2-methyl-5-(diphosphooxymethyl)pyrimidine + 2 H(+) = thiamine phosphate + CO2 + diphosphate. The catalysed reaction is 4-methyl-5-(2-phosphooxyethyl)-thiazole + 4-amino-2-methyl-5-(diphosphooxymethyl)pyrimidine + H(+) = thiamine phosphate + diphosphate. It functions in the pathway cofactor biosynthesis; thiamine diphosphate biosynthesis; thiamine phosphate from 4-amino-2-methyl-5-diphosphomethylpyrimidine and 4-methyl-5-(2-phosphoethyl)-thiazole: step 1/1. Condenses 4-methyl-5-(beta-hydroxyethyl)thiazole monophosphate (THZ-P) and 2-methyl-4-amino-5-hydroxymethyl pyrimidine pyrophosphate (HMP-PP) to form thiamine monophosphate (TMP). The chain is Thiamine-phosphate synthase from Haemophilus influenzae (strain 86-028NP).